We begin with the raw amino-acid sequence, 83 residues long: MRTFTLIAILTCAVLVIFHAAAAEELEAQDVIETEALATLDEERLFECSFSCDIKKNGKPCKGSGEKKCSGGWRCKMNFCVKV.

The first 23 residues, Met1–Ala23, serve as a signal peptide directing secretion. A propeptide spanning residues Glu24–Arg44 is cleaved from the precursor. 3 cysteine pairs are disulfide-bonded: Cys48/Cys61, Cys52/Cys75, and Cys69/Cys80.

This sequence belongs to the neurotoxin 12 (Hwtx-2) family. 03 (juruin) subfamily. Contains 3 disulfide bonds. Two different connectivities are observed in similar proteins (C1-C3, C2-C5, C4-C6 or C1-C4, C2-C5, C3-C6). Expressed by the venom gland.

The protein resides in the secreted. Its function is as follows. Probable ion channel inhibitor. The protein is U3-theraphotoxin-Cg1a of Chilobrachys guangxiensis (Chinese earth tiger tarantula).